The chain runs to 482 residues: tRNA sulfurtransferase (482 aa).

The THUMP domain maps to 61–165 (LAIRDALTRI…DDRLLLIKGR (105 aa)). ATP contacts are provided by residues 183–184 (LI), Lys-265, Gly-287, and Gln-296. Cysteines 344 and 456 form a disulfide. In terms of domain architecture, Rhodanese spans 404–482 (FGPNDVILDI…GFNNVKVYRP (79 aa)). Catalysis depends on Cys-456, which acts as the Cysteine persulfide intermediate.

Belongs to the ThiI family.

The protein resides in the cytoplasm. It carries out the reaction [ThiI sulfur-carrier protein]-S-sulfanyl-L-cysteine + a uridine in tRNA + 2 reduced [2Fe-2S]-[ferredoxin] + ATP + H(+) = [ThiI sulfur-carrier protein]-L-cysteine + a 4-thiouridine in tRNA + 2 oxidized [2Fe-2S]-[ferredoxin] + AMP + diphosphate. The catalysed reaction is [ThiS sulfur-carrier protein]-C-terminal Gly-Gly-AMP + S-sulfanyl-L-cysteinyl-[cysteine desulfurase] + AH2 = [ThiS sulfur-carrier protein]-C-terminal-Gly-aminoethanethioate + L-cysteinyl-[cysteine desulfurase] + A + AMP + 2 H(+). The protein operates within cofactor biosynthesis; thiamine diphosphate biosynthesis. Catalyzes the ATP-dependent transfer of a sulfur to tRNA to produce 4-thiouridine in position 8 of tRNAs, which functions as a near-UV photosensor. Also catalyzes the transfer of sulfur to the sulfur carrier protein ThiS, forming ThiS-thiocarboxylate. This is a step in the synthesis of thiazole, in the thiamine biosynthesis pathway. The sulfur is donated as persulfide by IscS. In Escherichia coli O127:H6 (strain E2348/69 / EPEC), this protein is tRNA sulfurtransferase.